Consider the following 632-residue polypeptide: RNA-binding post-transcriptional regulator csx1 (632 aa).

Phosphoserine; by MAPK sty1 occurs at positions 42 and 54. Phosphoserine occurs at positions 67 and 69. RRM domains follow at residues 85 to 167 and 182 to 261; these read DTLW…WATG and FSIF…VASP. Serine 291 carries the phosphoserine; by MAPK sty1 modification. In terms of domain architecture, RRM 3 spans 297-369; that stretch reads TTVFVGGLAS…SHIRLAWGHN (73 aa). Serine 455 is modified (phosphoserine; by MAPK sty1). The disordered stretch occupies residues 456–476; the sequence is PPPLSRSASISPTLSGSGSGL. The segment covering 466–476 has biased composition (low complexity); that stretch reads SPTLSGSGSGL.

Interacts with cip1 and cip2.

It localises to the cytoplasm. Its function is as follows. Regulates global gene expression after oxidative stress. Interacts and stabilizes atf1 and pcr1 mRNAs after oxidative stress, thus controlling their turnover. The chain is RNA-binding post-transcriptional regulator csx1 (csx1) from Schizosaccharomyces pombe (strain 972 / ATCC 24843) (Fission yeast).